The sequence spans 965 residues: Klaroid protein (965 aa).

The segment at 1 to 20 is disordered; that stretch reads MSENTYQIETRRRSRSKTPF. 2 consecutive transmembrane segments (helical) span residues 303 to 323 and 343 to 363; these read TIGG…GSVL and FLIF…LLLQ. Positions 585–612 form a coiled coil; it reads SSDAEVQIERLNREIAFIKLALSDKQAE. The SUN domain occupies 801–963; that stretch reads GGQILSTRCT…YRFRVHGKPP (163 aa).

Core component of the LINC complex which is composed of inner nuclear membrane SUN domain-containing proteins coupled to outer nuclear membrane KASH domain-containing nesprins. Expressed in all cells in the eye disk.

It localises to the membrane. Its subcellular location is the cytoplasm. It is found in the cytoskeleton. The protein localises to the microtubule organizing center. The protein resides in the perinuclear region. Component of the LINC (LInker of Nucleoskeleton and Cytoskeleton) complex involved in the connection between the nuclear lamina and the cytoskeleton. Is required to nuclear migration in eye and to anchor klar in the nuclear membrane. The protein is Klaroid protein of Drosophila melanogaster (Fruit fly).